The primary structure comprises 487 residues: MKDILKLSIAEMHENLIKKEFSAVELTQAHIDAINNEQLNAFITKTPEVALNAARKADHILTHEQDKITSLTGIPVGIKDLFCTKNIKTTACSNILRNFTPQYDSTVVKRLIDDGAVMLGKLNMDEFAMGSSNSNSCFGPVENPWTRADGVKVVPGGSSGGSSAAVAGFLCAGALGSDTGGSVRQPAAFCGIVGLKPTYGRCSRSGMIAFASSLDQAGVLTRTVKDAALMLQPICGYDTQDSTSANITTPRFLDSITNIIKGKRIGIPKEYELSNKYKEYEEVSEMWLKGIKYLENEGAEIVNISLPHTSYALPVYYIICSAEASSNLARYDGIKYGTRVNSDNINEMYELTRGNNLGTEVKRRILIGAYALSSGYYDAYYNKAQCIRRLVTNDFVESFKSVDYILTPTAPKEAFAMDEQLDTLTMYLNDVFTVPASLAGLPAISIPIGLSKNKLPLSLQIIGNYYDEGGILNIASVIEKYTGNILK.

Residues K79 and S158 each act as charge relay system in the active site. S182 (acyl-ester intermediate) is an active-site residue.

Belongs to the amidase family. GatA subfamily. As to quaternary structure, heterotrimer of A, B and C subunits.

It carries out the reaction L-glutamyl-tRNA(Gln) + L-glutamine + ATP + H2O = L-glutaminyl-tRNA(Gln) + L-glutamate + ADP + phosphate + H(+). Allows the formation of correctly charged Gln-tRNA(Gln) through the transamidation of misacylated Glu-tRNA(Gln) in organisms which lack glutaminyl-tRNA synthetase. The reaction takes place in the presence of glutamine and ATP through an activated gamma-phospho-Glu-tRNA(Gln). The protein is Glutamyl-tRNA(Gln) amidotransferase subunit A of Ehrlichia ruminantium (strain Gardel).